Here is a 101-residue protein sequence, read N- to C-terminus: Anti-sigma factor RshA (101 aa).

The segment at 1–20 (MSETEREDERWTPPIGPIDP) is disordered. Iron-sulfur cluster contacts are provided by C25, H51, C55, and C58. The residue at position 96 (T96) is a Phosphothreonine.

It belongs to the zinc-associated anti-sigma factor (ZAS) superfamily. In terms of assembly, interacts with cognate ECF RNA polymerase sigma factor SigH under reducing conditions; the complex is disrupted under oxiding conditions or as temperatures rise. Binding inhibits the interaction of SigH with the RNA polymerase catalytic core. Iron-sulfur cluster serves as cofactor. Phosphorylated, probably by PknB. Phosphorylation decreases interaction with SigH, probably leading to increased SigH-mediated transcription.

A redox-regulated anti-sigma factor for cognate extracytoplasmic function (ECF) sigma factor SigH. ECF sigma factors are held in an inactive form by an anti-sigma factor. Overexpression leads to increased susceptibility to diamide. This Mycolicibacterium smegmatis (strain ATCC 700084 / mc(2)155) (Mycobacterium smegmatis) protein is Anti-sigma factor RshA (rshA).